Reading from the N-terminus, the 123-residue chain is Small ribosomal subunit protein bS16 (123 aa).

The segment at 79–123 is disordered; that stretch reads AGIAKRPSRNNPTKGEPGKKAQERLALAKQAEEEAAAKAAEAASE.

The protein belongs to the bacterial ribosomal protein bS16 family.

This is Small ribosomal subunit protein bS16 from Brucella melitensis biotype 2 (strain ATCC 23457).